A 272-amino-acid chain; its full sequence is 4-hydroxy-tetrahydrodipicolinate reductase (272 aa).

NAD(+) is bound by residues 11 to 16 (GAGGRM) and Glu-37. Position 38 (Arg-38) interacts with NADP(+). Residues 101 to 103 (GTT) and 125 to 128 (AANF) contribute to the NAD(+) site. The Proton donor/acceptor role is filled by His-158. A (S)-2,3,4,5-tetrahydrodipicolinate-binding site is contributed by His-159. Catalysis depends on Lys-162, which acts as the Proton donor. 168-169 (GT) serves as a coordination point for (S)-2,3,4,5-tetrahydrodipicolinate.

The protein belongs to the DapB family. In terms of assembly, homotetramer.

It is found in the cytoplasm. It catalyses the reaction (S)-2,3,4,5-tetrahydrodipicolinate + NAD(+) + H2O = (2S,4S)-4-hydroxy-2,3,4,5-tetrahydrodipicolinate + NADH + H(+). The enzyme catalyses (S)-2,3,4,5-tetrahydrodipicolinate + NADP(+) + H2O = (2S,4S)-4-hydroxy-2,3,4,5-tetrahydrodipicolinate + NADPH + H(+). Its pathway is amino-acid biosynthesis; L-lysine biosynthesis via DAP pathway; (S)-tetrahydrodipicolinate from L-aspartate: step 4/4. Its function is as follows. Catalyzes the conversion of 4-hydroxy-tetrahydrodipicolinate (HTPA) to tetrahydrodipicolinate. The chain is 4-hydroxy-tetrahydrodipicolinate reductase from Edwardsiella ictaluri (strain 93-146).